A 477-amino-acid polypeptide reads, in one-letter code: Glycogen synthase (477 aa).

Residue K15 coordinates ADP-alpha-D-glucose.

Belongs to the glycosyltransferase 1 family. Bacterial/plant glycogen synthase subfamily.

The enzyme catalyses [(1-&gt;4)-alpha-D-glucosyl](n) + ADP-alpha-D-glucose = [(1-&gt;4)-alpha-D-glucosyl](n+1) + ADP + H(+). It functions in the pathway glycan biosynthesis; glycogen biosynthesis. Synthesizes alpha-1,4-glucan chains using ADP-glucose. This chain is Glycogen synthase, found in Streptococcus pneumoniae (strain JJA).